Reading from the N-terminus, the 225-residue chain is Ribonuclease 3 (225 aa).

The 126-residue stretch at 7–132 (MKAFEARLGY…VIAAVYRDGG (126 aa)) folds into the RNase III domain. Mg(2+) is bound at residue E45. Residue D49 is part of the active site. The Mg(2+) site is built by D118 and E121. E121 is a catalytic residue. The DRBM domain occupies 157 to 225 (DAKTALQEWA…AARKLLDSLD (69 aa)).

It belongs to the ribonuclease III family. As to quaternary structure, homodimer. It depends on Mg(2+) as a cofactor.

It is found in the cytoplasm. The catalysed reaction is Endonucleolytic cleavage to 5'-phosphomonoester.. Functionally, digests double-stranded RNA. Involved in the processing of primary rRNA transcript to yield the immediate precursors to the large and small rRNAs (23S and 16S). Processes some mRNAs, and tRNAs when they are encoded in the rRNA operon. Processes pre-crRNA and tracrRNA of type II CRISPR loci if present in the organism. The sequence is that of Ribonuclease 3 from Ruegeria pomeroyi (strain ATCC 700808 / DSM 15171 / DSS-3) (Silicibacter pomeroyi).